Here is a 425-residue protein sequence, read N- to C-terminus: Serine--tRNA ligase (425 aa).

229-231 (TSE) serves as a coordination point for L-serine. ATP is bound by residues 259–261 (RKE) and Val-275. Residue Glu-282 participates in L-serine binding. 349-352 (EITS) is a binding site for ATP. Position 384 (Thr-384) interacts with L-serine.

Belongs to the class-II aminoacyl-tRNA synthetase family. Type-1 seryl-tRNA synthetase subfamily. Homodimer. The tRNA molecule binds across the dimer.

It is found in the cytoplasm. The enzyme catalyses tRNA(Ser) + L-serine + ATP = L-seryl-tRNA(Ser) + AMP + diphosphate + H(+). It carries out the reaction tRNA(Sec) + L-serine + ATP = L-seryl-tRNA(Sec) + AMP + diphosphate + H(+). It participates in aminoacyl-tRNA biosynthesis; selenocysteinyl-tRNA(Sec) biosynthesis; L-seryl-tRNA(Sec) from L-serine and tRNA(Sec): step 1/1. Catalyzes the attachment of serine to tRNA(Ser). Is also able to aminoacylate tRNA(Sec) with serine, to form the misacylated tRNA L-seryl-tRNA(Sec), which will be further converted into selenocysteinyl-tRNA(Sec). The chain is Serine--tRNA ligase from Borreliella afzelii (strain PKo) (Borrelia afzelii).